The primary structure comprises 334 residues: 6-phosphogluconolactonase (334 aa).

The protein belongs to the cycloisomerase 2 family.

It catalyses the reaction 6-phospho-D-glucono-1,5-lactone + H2O = 6-phospho-D-gluconate + H(+). It participates in carbohydrate degradation; pentose phosphate pathway; D-ribulose 5-phosphate from D-glucose 6-phosphate (oxidative stage): step 2/3. Catalyzes the hydrolysis of 6-phosphogluconolactone to 6-phosphogluconate. In Buchnera aphidicola subsp. Acyrthosiphon pisum (strain APS) (Acyrthosiphon pisum symbiotic bacterium), this protein is 6-phosphogluconolactonase.